The sequence spans 366 residues: Histidinol-phosphate aminotransferase 2 (366 aa).

Residues Met-1–Gln-11 show a composition bias toward polar residues. The interval Met-1–Gln-21 is disordered. Residue Lys-222 is modified to N6-(pyridoxal phosphate)lysine.

The protein belongs to the class-II pyridoxal-phosphate-dependent aminotransferase family. Histidinol-phosphate aminotransferase subfamily. Homodimer. The cofactor is pyridoxal 5'-phosphate.

The enzyme catalyses L-histidinol phosphate + 2-oxoglutarate = 3-(imidazol-4-yl)-2-oxopropyl phosphate + L-glutamate. It functions in the pathway amino-acid biosynthesis; L-histidine biosynthesis; L-histidine from 5-phospho-alpha-D-ribose 1-diphosphate: step 7/9. The chain is Histidinol-phosphate aminotransferase 2 from Bacillus thuringiensis subsp. konkukian (strain 97-27).